The primary structure comprises 478 residues: Cytochrome P450 family 716 subfamily AD polypeptide 4 (478 aa).

A helical transmembrane segment spans residues 1–21 (MELFLPSVLLILTVFCFYYLF). Heme is bound at residue C425.

The protein belongs to the cytochrome P450 family. Requires heme as cofactor. Mainly expressed in petioles and, to a lower extent, in roots.

It localises to the membrane. The enzyme catalyses (1S,3bR,4R,5aR,9aR,9bR,11aS)-1-[(4R)-5-[(2S)-3,3-dimethyloxiran-2-yl]-1,4-dihydroxybutan-2-yl]-3b,6,6,9a,11a-pentamethyl-7-oxo-1H,2H,3bH,4H,5H,5aH,6H,7H,9aH,9bH,10H,11H,11aH-cyclopenta[a]phenanthren-4-yl acetate + reduced [NADPH--hemoprotein reductase] + O2 = (1S,3bR,4R,5aR,9aR,9bR,11aS)-1-(1-hydroxy-4-oxobutan-2-yl)-3b,6,6,9a,11a-pentamethyl-7-oxo-1H,2H,3bH,4H,5H,5aH,6H,7H,9aH,9bH,10H,11H,11aH-cyclopenta[a]phenanthren-4-yl acetate + 2-methylpropanoate + oxidized [NADPH--hemoprotein reductase] + H2O + 2 H(+). The protein operates within secondary metabolite biosynthesis; terpenoid biosynthesis. Functionally, monooxygenase involved in the biosynthesis of limonoids triterpene natural products such as azadirachtin, an antifeedant widely used as bioinsecticide, and possessing many medicinal applications including anti-tumoral, anti-malarial, anti-rheumatic, antibacterial, anti-inflammatory, anti-pyretic and diuretic effects. Catalyzes the formation of (1S,3bR,4R,5aR,9aR,9bR,11aS)-1-(1-hydroxy-4-oxobutan-2-yl)-3b,6,6,9a,11a-pentamethyl-7-oxo-1H,2H,3bH,4H,5H,5aH,6H,7H,9aH,9bH,10H,11H,11aH-cyclopenta[a]phenanthren-4-yl acetate. The protein is Cytochrome P450 family 716 subfamily AD polypeptide 4 of Melia azedarach (Chinaberry tree).